The sequence spans 387 residues: MASVGIVTPQSLRLNAPLPLRSGAVLDDCTLVYETYGTLNATRSNAVLVCHALNASHHVAGRYEGQDKSEGWWDNLIGPGKPLDTDRFFVIGVNNPGSCFGSTGPASTDPKTGRPYGADFPVVTVEDWVDAQARLLDALGIEQLAAVIGGSLGGMQAMSWTVRYPQRVRHAIVVASAPNLSAQNIAFNEVARRAIVTDPDFHGGHFYAHGVVPKRGLRVARMVGHITYLSDDVMASKFGRQTLNPELAYSTQDIEFQIESYLRYQGDKFSDYFDANTYLLITRALDYFDPAREFDGDLSRALAGATAKFLVVSFTTDWRFSPERSREIVKALVDNRRDVSYAEIDAPHGHDAFLMTDARYHNVLRAYFARIADEAVAPAGGIKGFAV.

Residues 45 to 354 (NAVLVCHALN…DAPHGHDAFL (310 aa)) enclose the AB hydrolase-1 domain. S151 serves as the catalytic Nucleophile. R221 contributes to the substrate binding site. Active-site residues include D317 and H350. D351 contributes to the substrate binding site.

It belongs to the AB hydrolase superfamily. MetX family. In terms of assembly, homodimer.

It is found in the cytoplasm. It carries out the reaction L-homoserine + succinyl-CoA = O-succinyl-L-homoserine + CoA. It functions in the pathway amino-acid biosynthesis; L-methionine biosynthesis via de novo pathway; O-succinyl-L-homoserine from L-homoserine: step 1/1. Functionally, transfers a succinyl group from succinyl-CoA to L-homoserine, forming succinyl-L-homoserine. The sequence is that of Homoserine O-succinyltransferase from Methylibium petroleiphilum (strain ATCC BAA-1232 / LMG 22953 / PM1).